The chain runs to 148 residues: Large-conductance mechanosensitive channel (148 aa).

The next 2 helical transmembrane spans lie at 16–36 (VMDL…VNSI) and 89–109 (GSFI…FLMV).

This sequence belongs to the MscL family. In terms of assembly, homopentamer.

The protein localises to the cell inner membrane. Channel that opens in response to stretch forces in the membrane lipid bilayer. May participate in the regulation of osmotic pressure changes within the cell. This Paraburkholderia phytofirmans (strain DSM 17436 / LMG 22146 / PsJN) (Burkholderia phytofirmans) protein is Large-conductance mechanosensitive channel.